We begin with the raw amino-acid sequence, 428 residues long: Putative ankyrin repeat protein FPV234 (428 aa).

8 ANK repeats span residues Lys6–Val35, Tyr39–Ile68, Phe71–Leu100, Tyr103–Ser132, Asn137–Lys169, Thr174–Ile202, Met206–Ala238, and Glu242–Tyr271.

The chain is Putative ankyrin repeat protein FPV234 from Fowlpox virus (strain NVSL) (FPV).